The primary structure comprises 250 residues: MKGFLKPNFSLGALFLTLSPIATACIAEKPVNNRFNFNSEQLARLRKARVNHWRDGDTLEVSFANNHQKPIRIYAIDTPEKAVLSIQRKSEIELKEANKATEFAKSLIPIGSEVWIWPLNSYSYDREVAAVFFKTNPLQLHFESFAVEMVANGHALPIAGNDFDFVFSDLDPFNPLKIVGIELANGLNNAFNNRKNIFSYLENSFQSITMVYQQRGVDQSWTRYLAPSNDFSSTKLGLGLTIYELKLNNG.

Positions 1 to 24 (MKGFLKPNFSLGALFLTLSPIATA) are cleaved as a signal peptide. Cys25 carries N-palmitoyl cysteine lipidation. Residue Cys25 is the site of S-diacylglycerol cysteine attachment. The 157-residue stretch at 44-200 (RLRKARVNHW…FNNRKNIFSY (157 aa)) folds into the TNase-like domain.

It localises to the cell membrane. This is an uncharacterized protein from Mycoplasma genitalium (strain ATCC 33530 / DSM 19775 / NCTC 10195 / G37) (Mycoplasmoides genitalium).